The primary structure comprises 635 residues: Threonine--tRNA ligase (635 aa).

The region spanning 1 to 62 is the TGS domain; sequence MITITLPDGS…EHDAMLRIIT (62 aa). The tract at residues 244-535 is catalytic; it reads DHRKIGKVQD…LIEHYAGIWP (292 aa). Cys335, His386, and His512 together coordinate Zn(2+).

It belongs to the class-II aminoacyl-tRNA synthetase family. As to quaternary structure, homodimer. It depends on Zn(2+) as a cofactor.

It is found in the cytoplasm. The enzyme catalyses tRNA(Thr) + L-threonine + ATP = L-threonyl-tRNA(Thr) + AMP + diphosphate + H(+). Catalyzes the attachment of threonine to tRNA(Thr) in a two-step reaction: L-threonine is first activated by ATP to form Thr-AMP and then transferred to the acceptor end of tRNA(Thr). Also edits incorrectly charged L-seryl-tRNA(Thr). This chain is Threonine--tRNA ligase, found in Xylella fastidiosa (strain 9a5c).